The primary structure comprises 355 residues: Galactoside 2-alpha-L-fucosyltransferase (355 aa).

Residues 1–15 are Cytoplasmic-facing; it reads MRNVKGLFSYMTKTK. The helical; Signal-anchor for type II membrane protein transmembrane segment at 16 to 36 threads the bilayer; sequence SFYISIIVIIFIIFIVNRMGP. The Lumenal portion of the chain corresponds to 37 to 355; it reads RNYNYKQIGT…MSRNGSIISK (319 aa). 3 N-linked (GlcNAc...) asparagine glycosylation sites follow: Asn92, Asn311, and Asn349.

It belongs to the glycosyltransferase 11 family. Expression is restricted to the 20 intestinal cells in larvae and adult.

Its subcellular location is the golgi apparatus. The protein localises to the golgi stack membrane. It participates in protein modification; protein glycosylation. Functionally, selectively catalyzes the addition of fucose in alpha 1-2 linkage to Gal-beta-(1-&gt;4)-Xyl-beta-R, Gal-beta-(1-&gt;6)-GlcNAc-R, Gal-beta-(1-&gt;3)-Gal-beta-(1-&gt;4)-Glc and Gal-beta-(1-&gt;3)-Gal-beta-(1-&gt;4)-Xyl-R acceptors but not Gal-beta-(1-&gt;3)-GlcNAc-beta-(1-&gt;3)-Gal-beta-(1-&gt;4)-Glc. Unlike in mammals, unable to fucosylate Gal-beta-(1-&gt;4)-Glc-beta-R. The protein is Galactoside 2-alpha-L-fucosyltransferase of Caenorhabditis elegans.